Reading from the N-terminus, the 382-residue chain is Queuine tRNA-ribosyltransferase (382 aa).

The active-site Proton acceptor is the Asp89. Substrate contacts are provided by residues 89–93 (DSGGF), Asp143, Gln187, and Gly214. The tract at residues 245-251 (GVGKPED) is RNA binding. Asp264 acts as the Nucleophile in catalysis. The tract at residues 269–273 (TRNAR) is RNA binding; important for wobble base 34 recognition. 4 residues coordinate Zn(2+): Cys302, Cys304, Cys307, and His333.

The protein belongs to the queuine tRNA-ribosyltransferase family. Homodimer. Within each dimer, one monomer is responsible for RNA recognition and catalysis, while the other monomer binds to the replacement base PreQ1. Zn(2+) is required as a cofactor.

The catalysed reaction is 7-aminomethyl-7-carbaguanine + guanosine(34) in tRNA = 7-aminomethyl-7-carbaguanosine(34) in tRNA + guanine. It participates in tRNA modification; tRNA-queuosine biosynthesis. Catalyzes the base-exchange of a guanine (G) residue with the queuine precursor 7-aminomethyl-7-deazaguanine (PreQ1) at position 34 (anticodon wobble position) in tRNAs with GU(N) anticodons (tRNA-Asp, -Asn, -His and -Tyr). Catalysis occurs through a double-displacement mechanism. The nucleophile active site attacks the C1' of nucleotide 34 to detach the guanine base from the RNA, forming a covalent enzyme-RNA intermediate. The proton acceptor active site deprotonates the incoming PreQ1, allowing a nucleophilic attack on the C1' of the ribose to form the product. After dissociation, two additional enzymatic reactions on the tRNA convert PreQ1 to queuine (Q), resulting in the hypermodified nucleoside queuosine (7-(((4,5-cis-dihydroxy-2-cyclopenten-1-yl)amino)methyl)-7-deazaguanosine). The sequence is that of Queuine tRNA-ribosyltransferase from Sodalis glossinidius (strain morsitans).